Reading from the N-terminus, the 350-residue chain is Phosphoribosylformylglycinamidine cyclo-ligase (350 aa).

The protein belongs to the AIR synthase family.

The protein localises to the cytoplasm. The enzyme catalyses 2-formamido-N(1)-(5-O-phospho-beta-D-ribosyl)acetamidine + ATP = 5-amino-1-(5-phospho-beta-D-ribosyl)imidazole + ADP + phosphate + H(+). It participates in purine metabolism; IMP biosynthesis via de novo pathway; 5-amino-1-(5-phospho-D-ribosyl)imidazole from N(2)-formyl-N(1)-(5-phospho-D-ribosyl)glycinamide: step 2/2. In Syntrophotalea carbinolica (strain DSM 2380 / NBRC 103641 / GraBd1) (Pelobacter carbinolicus), this protein is Phosphoribosylformylglycinamidine cyclo-ligase.